Consider the following 518-residue polypeptide: Membrane-bound lytic murein transglycosylase F (518 aa).

The N-terminal stretch at 1 to 21 (MKKLKINYLFIGILALLLAVA) is a signal peptide. Residues 22 to 269 (LWPSIPWFGK…RIEEKYLGHG (248 aa)) are non-LT domain. Residues 270–518 (DDFDYVDTRT…SRKGSEEKQN (249 aa)) are LT domain. The active site involves E314.

This sequence in the N-terminal section; belongs to the bacterial solute-binding protein 3 family. It in the C-terminal section; belongs to the transglycosylase Slt family.

Its subcellular location is the cell outer membrane. It carries out the reaction Exolytic cleavage of the (1-&gt;4)-beta-glycosidic linkage between N-acetylmuramic acid (MurNAc) and N-acetylglucosamine (GlcNAc) residues in peptidoglycan, from either the reducing or the non-reducing ends of the peptidoglycan chains, with concomitant formation of a 1,6-anhydrobond in the MurNAc residue.. Functionally, murein-degrading enzyme that degrades murein glycan strands and insoluble, high-molecular weight murein sacculi, with the concomitant formation of a 1,6-anhydromuramoyl product. Lytic transglycosylases (LTs) play an integral role in the metabolism of the peptidoglycan (PG) sacculus. Their lytic action creates space within the PG sacculus to allow for its expansion as well as for the insertion of various structures such as secretion systems and flagella. The protein is Membrane-bound lytic murein transglycosylase F of Escherichia coli O6:H1 (strain CFT073 / ATCC 700928 / UPEC).